Reading from the N-terminus, the 1053-residue chain is Integrin alpha-3 (1053 aa).

The first 32 residues, M1 to A32, serve as a signal peptide directing secretion. Over F33 to E993 the chain is Extracellular. FG-GAP repeat units lie at residues R38–C103, E110–L171, C185–S235, E236–L293, Q294–P355, Q357–R412, and Q416–P478. The N-linked (GlcNAc...) asparagine glycan is linked to N86. 3 cysteine pairs are disulfide-bonded: C94-C103, C140-C162, and C185-C197. Intrachain disulfides connect C486–C491 and C497–C551. Residues N501, N512, N574, and N606 are each glycosylated (N-linked (GlcNAc...) asparagine). C616 and C622 form a disulfide bridge. 4 N-linked (GlcNAc...) asparagine glycosylation sites follow: N657, N699, N843, and N859. C695 and C704 form a disulfide bridge. 2 disulfides stabilise this stretch: C848–C906 and C913–C918. The interval P865–V890 is disordered. N-linked (GlcNAc...) asparagine glycans are attached at residues N925, N928, N937, and N971. A helical transmembrane segment spans residues L994 to F1021. C1018 is lipidated: S-palmitoyl cysteine. The Cytoplasmic segment spans residues K1022 to Y1053.

This sequence belongs to the integrin alpha chain family. Heterodimer of an alpha and a beta subunit. The alpha subunit is composed of a heavy and a light chain linked by a disulfide bond. Alpha-3 associates with beta-1. Interacts with HPS5. Interacts with FAP (seprase); the interaction occurs at the cell surface of invadopodia membrane in a collagen-dependent manner. Isoform 1 and isoform 2 are expressed in heart and brain. Only isoform 1 is detected in lung.

The protein resides in the cell membrane. It localises to the cell projection. Its subcellular location is the invadopodium membrane. The protein localises to the filopodium membrane. Its function is as follows. Integrin alpha-3/beta-1 is a receptor for fibronectin, laminin, collagen, epiligrin, thrombospondin and CSPG4. Integrin alpha-3/beta-1 provides a docking site for FAP (seprase) at invadopodia plasma membranes in a collagen-dependent manner and hence may participate in the adhesion, formation of invadopodia and matrix degradation processes, promoting cell invasion. Alpha-3/beta-1 may mediate with LGALS3 the stimulation by CSPG4 of endothelial cells migration. This is Integrin alpha-3 (Itga3) from Mus musculus (Mouse).